The primary structure comprises 316 residues: Ribosomal RNA small subunit methyltransferase A (316 aa).

6 residues coordinate S-adenosyl-L-methionine: Asn-33, Val-35, Gly-60, Glu-81, Asp-110, and Asn-133.

The protein belongs to the class I-like SAM-binding methyltransferase superfamily. rRNA adenine N(6)-methyltransferase family. RsmA subfamily.

Its subcellular location is the cytoplasm. It catalyses the reaction adenosine(1518)/adenosine(1519) in 16S rRNA + 4 S-adenosyl-L-methionine = N(6)-dimethyladenosine(1518)/N(6)-dimethyladenosine(1519) in 16S rRNA + 4 S-adenosyl-L-homocysteine + 4 H(+). In terms of biological role, specifically dimethylates two adjacent adenosines (A1518 and A1519) in the loop of a conserved hairpin near the 3'-end of 16S rRNA in the 30S particle. May play a critical role in biogenesis of 30S subunits. In Corynebacterium jeikeium (strain K411), this protein is Ribosomal RNA small subunit methyltransferase A.